The following is a 58-amino-acid chain: WFPCEYECRVDWGSNRRQLRTCTKECEQERASCMTGSSDPACSTNKANNQLHVQFKTL.

In terms of tissue distribution, component of the organic matrix of calcified shell layers.

The polypeptide is Gigasin-4 (Magallana gigas (Pacific oyster)).